An 809-amino-acid polypeptide reads, in one-letter code: Trimethylamine-N-oxide reductase 2 (809 aa).

The segment at residues 1 to 31 (MTLTRREFIKHSGIAAGALVVTSAAPLPAWA) is a signal peptide (tat-type signal). Ser176 lines the Mo-bis(molybdopterin guanine dinucleotide) pocket.

Belongs to the prokaryotic molybdopterin-containing oxidoreductase family. Mo-bis(molybdopterin guanine dinucleotide) is required as a cofactor. Post-translationally, predicted to be exported by the Tat system. The position of the signal peptide cleavage has not been experimentally proven.

It is found in the periplasm. The enzyme catalyses trimethylamine + 2 Fe(III)-[cytochrome c] + H2O = trimethylamine N-oxide + 2 Fe(II)-[cytochrome c] + 3 H(+). Reduces trimethylamine-N-oxide (TMAO) into trimethylamine; an anaerobic reaction coupled to energy-yielding reactions. Can also reduce other N- and S-oxide compounds such as 4-methylmorpholine-N-oxide and biotin sulfoxide (BSO), but with a lower catalytic efficiency. The protein is Trimethylamine-N-oxide reductase 2 (torZ) of Escherichia coli O157:H7.